Here is a 617-residue protein sequence, read N- to C-terminus: Na(+)/H(+) antiporter NhaA 1 (617 aa).

The na(+)/H(+) antiporter NhaA stretch occupies residues 1-433 (MTVTEQTTAR…GWAIFRITDW (433 aa)). 11 helical membrane-spanning segments follow: residues 33 to 53 (AAALLLTFTVIAILWANSPWA), 75 to 95 (MTVKHLVNDALMTFFFFIVGL), 113 to 133 (AVPVVAAAAGLIVPAIVFLAF), 141 to 161 (HAWGVVISTDTAFLVGALAII), 171 to 191 (LFLLTLAVVDDVGALVAIAVF), 194 to 214 (DAIQVGPLVVAVAVLVALALV), 234 to 254 (VALYLAGIHPTLAGVAVALLI), 304 to 324 (VGPAVSFVILPLFALVNAGVL), 340 to 360 (WGVVAGLVIGKFVGITGATWL), 378 to 398 (IAGGAALSGIGFTISLFIVDI), and 411 to 431 (IGVLAASVLAFVFGWAIFRIT). One can recognise a Thioredoxin domain in the interval 434–617 (LSPPEPVGLK…LIRALEAGRR (184 aa)).

The protein in the N-terminal section; belongs to the NhaA Na(+)/H(+) (TC 2.A.33) antiporter family.

It localises to the cell membrane. It catalyses the reaction Na(+)(in) + 2 H(+)(out) = Na(+)(out) + 2 H(+)(in). Functionally, na(+)/H(+) antiporter that extrudes sodium in exchange for external protons. This Mycolicibacterium vanbaalenii (strain DSM 7251 / JCM 13017 / BCRC 16820 / KCTC 9966 / NRRL B-24157 / PYR-1) (Mycobacterium vanbaalenii) protein is Na(+)/H(+) antiporter NhaA 1.